A 152-amino-acid chain; its full sequence is Nucleoside diphosphate kinase (152 aa).

The ATP site is built by K11, F59, R87, T93, R104, and N114. The Pros-phosphohistidine intermediate role is filled by H117.

Belongs to the NDK family. Homotetramer. Requires Mg(2+) as cofactor.

Its subcellular location is the cytoplasm. The catalysed reaction is a 2'-deoxyribonucleoside 5'-diphosphate + ATP = a 2'-deoxyribonucleoside 5'-triphosphate + ADP. It catalyses the reaction a ribonucleoside 5'-diphosphate + ATP = a ribonucleoside 5'-triphosphate + ADP. Major role in the synthesis of nucleoside triphosphates other than ATP. The ATP gamma phosphate is transferred to the NDP beta phosphate via a ping-pong mechanism, using a phosphorylated active-site intermediate. The chain is Nucleoside diphosphate kinase from Prochlorococcus marinus subsp. pastoris (strain CCMP1986 / NIES-2087 / MED4).